A 174-amino-acid chain; its full sequence is Neuromedin-U (174 aa).

An N-terminal signal peptide occupies residues 1 to 34; that stretch reads MLRTESCRPRSPAGQVAAASPLLLLLLLLAWCAG. Positions 35–103 are excised as a propeptide; that stretch reads ACRGAPILPQ…EQDEKDNTKR (69 aa). Met-139 carries the post-translational modification Methionine sulfoxide; partial. Asn-166 carries the post-translational modification Asparagine amide. Positions 170–174 are excised as a propeptide; it reads SAGFI.

This sequence belongs to the NmU family. In terms of tissue distribution, expressed throughout the enteric nervous system with highest levels being found in the jejunum.

It is found in the secreted. Its function is as follows. Ligand for receptors NMUR1 and NMUR2. Stimulates muscle contractions of specific regions of the gastrointestinal tract. In humans, NmU stimulates contractions of the ileum and urinary bladder. Does not function as a ligand for either NMUR1 or NMUR2. Indirectly induces prolactin release although its potency is much lower than that of neuromedin precursor-related peptide 36. Functionally, does not function as a ligand for either NMUR1 or NMUR2. Indirectly induces prolactin release from lactotroph cells in the pituitary gland, probably via the hypothalamic dopaminergic system. This is Neuromedin-U (NMU) from Homo sapiens (Human).